The chain runs to 160 residues: 2-C-methyl-D-erythritol 2,4-cyclodiphosphate synthase (160 aa).

A divalent metal cation-binding residues include D10 and H12. Residues 10-12 (DVH) and 36-37 (HS) each bind 4-CDP-2-C-methyl-D-erythritol 2-phosphate. H44 is an a divalent metal cation binding site. Residues 58–60 (DIG), 134–137 (TTTE), F141, and R144 each bind 4-CDP-2-C-methyl-D-erythritol 2-phosphate.

The protein belongs to the IspF family. In terms of assembly, homotrimer. Requires a divalent metal cation as cofactor.

The enzyme catalyses 4-CDP-2-C-methyl-D-erythritol 2-phosphate = 2-C-methyl-D-erythritol 2,4-cyclic diphosphate + CMP. It participates in isoprenoid biosynthesis; isopentenyl diphosphate biosynthesis via DXP pathway; isopentenyl diphosphate from 1-deoxy-D-xylulose 5-phosphate: step 4/6. Involved in the biosynthesis of isopentenyl diphosphate (IPP) and dimethylallyl diphosphate (DMAPP), two major building blocks of isoprenoid compounds. Catalyzes the conversion of 4-diphosphocytidyl-2-C-methyl-D-erythritol 2-phosphate (CDP-ME2P) to 2-C-methyl-D-erythritol 2,4-cyclodiphosphate (ME-CPP) with a corresponding release of cytidine 5-monophosphate (CMP). This chain is 2-C-methyl-D-erythritol 2,4-cyclodiphosphate synthase, found in Phocaeicola vulgatus (strain ATCC 8482 / DSM 1447 / JCM 5826 / CCUG 4940 / NBRC 14291 / NCTC 11154) (Bacteroides vulgatus).